Reading from the N-terminus, the 409-residue chain is Na(+)/H(+) antiporter NhaA (409 aa).

The next 11 helical transmembrane spans lie at 13 to 33, 58 to 78, 93 to 113, 120 to 140, 153 to 173, 176 to 196, 216 to 236, 256 to 276, 279 to 299, 326 to 346, and 363 to 383; these read SGGI…NTFL, LILW…GLEL, IALP…IFYL, FALG…LGIL, IFLM…IALF, SELS…LFAL, VAVL…AFFI, LHGW…AGIS, GVGL…GLFV, FIQL…SLFI, and LAIL…LKFS.

It belongs to the NhaA Na(+)/H(+) (TC 2.A.33) antiporter family.

It localises to the cell inner membrane. It catalyses the reaction Na(+)(in) + 2 H(+)(out) = Na(+)(out) + 2 H(+)(in). Na(+)/H(+) antiporter that extrudes sodium in exchange for external protons. This chain is Na(+)/H(+) antiporter NhaA, found in Campylobacter concisus (strain 13826).